The following is a 436-amino-acid chain: C4-dicarboxylate transport protein 2 (436 aa).

The next 9 helical transmembrane spans lie at 14-34 (VLVA…TAVA), 45-65 (LIKM…IAGM), 77-97 (MALL…LVVV), 142-162 (VVGA…VLFG), 198-218 (PIGA…GSLV), 223-243 (LMLC…GGIA), 290-310 (VVGL…SIYL), 331-351 (ITLL…TGSG), and 353-373 (IVLA…LALI). Residues 414–436 (ELAGEGNASSPASDIPVGGREAV) form a disordered region.

The protein belongs to the dicarboxylate/amino acid:cation symporter (DAACS) (TC 2.A.23) family.

It is found in the cell inner membrane. Functionally, responsible for the transport of dicarboxylates such as succinate, fumarate, and malate from the periplasm across the membrane. This Pseudomonas paraeruginosa (strain DSM 24068 / PA7) (Pseudomonas aeruginosa (strain PA7)) protein is C4-dicarboxylate transport protein 2.